A 91-amino-acid chain; its full sequence is Small ribosomal subunit protein bS16 (91 aa).

Belongs to the bacterial ribosomal protein bS16 family.

This Staphylococcus epidermidis (strain ATCC 35984 / DSM 28319 / BCRC 17069 / CCUG 31568 / BM 3577 / RP62A) protein is Small ribosomal subunit protein bS16.